The chain runs to 67 residues: Probable Sec-independent protein translocase protein TatE (67 aa).

A helical membrane pass occupies residues 4–21 (ISITKLLVVAALVVLLFG).

It belongs to the TatA/E family. TatE subfamily.

It is found in the cell inner membrane. Its function is as follows. Part of the twin-arginine translocation (Tat) system that transports large folded proteins containing a characteristic twin-arginine motif in their signal peptide across membranes. TatE shares overlapping functions with TatA. The chain is Probable Sec-independent protein translocase protein TatE from Salmonella arizonae (strain ATCC BAA-731 / CDC346-86 / RSK2980).